Reading from the N-terminus, the 231-residue chain is 2-C-methyl-D-erythritol 4-phosphate cytidylyltransferase (231 aa).

It belongs to the IspD/TarI cytidylyltransferase family. IspD subfamily.

It carries out the reaction 2-C-methyl-D-erythritol 4-phosphate + CTP + H(+) = 4-CDP-2-C-methyl-D-erythritol + diphosphate. The protein operates within isoprenoid biosynthesis; isopentenyl diphosphate biosynthesis via DXP pathway; isopentenyl diphosphate from 1-deoxy-D-xylulose 5-phosphate: step 2/6. In terms of biological role, catalyzes the formation of 4-diphosphocytidyl-2-C-methyl-D-erythritol from CTP and 2-C-methyl-D-erythritol 4-phosphate (MEP). This chain is 2-C-methyl-D-erythritol 4-phosphate cytidylyltransferase, found in Fusobacterium nucleatum subsp. nucleatum (strain ATCC 25586 / DSM 15643 / BCRC 10681 / CIP 101130 / JCM 8532 / KCTC 2640 / LMG 13131 / VPI 4355).